The following is a 561-amino-acid chain: MNINVADLLNGNYILLLFVVLALGLCLGKLRLGSVQLGNSIGVLVVSLLLGQQHFSINTDALNLGFMLFIFCVGVEAGPNFFSIFFRDGKNYLMLALVMVGSALLIALGLGKLFGWDIGLTAGMLAGSMTSTPVLVGAGDTLRHSGIASTQLSSALDNLSLGYALTYLIGLVSLIVGARYLPKLQHQDLQTSAQQIARERGLDTDANRKVYLPVIRAYRVGPELVAWTDGKNLRELGIYRQTGCYIERIRRNGILANPDGDAVLQMGDEIALVGYPDAHARLDPSFRNGKEVFDRDLLDMRIVTEEIVVKNHNAVGRRLAQLKLTDHGCFLNRVIRSQIEMPIDDNVVLNKGDVLQVSGDARRVKTIADRIGFISIHSQVTDLLAFCAFFIIGLMIGMITFQFSNFSFGIGNAAGLLFAGIMLGFLRANHPTFGYIPQGALNMVKEFGLMVFMAGVGLSAGSGINNGLGAVGGQMLIAGLVVSLVPVVICFLFGAYVLRMNRALLFGAMMGARTCAPAMEIISDTARSNIPALGYAGTYAIANVLLTLAGTLIVIIWPGLG.

5 helical membrane passes run 8–28 (LLNGNYILLLFVVLALGLCLG), 32–52 (LGSVQLGNSIGVLVVSLLLGQ), 66–86 (FMLFIFCVGVEAGPNFFSIFF), 94–114 (MLALVMVGSALLIALGLGKLF), and 158–178 (NLSLGYALTYLIGLVSLIVGA). RCK C-terminal domains follow at residues 200-288 (RGLD…SFRN) and 292-373 (VFDR…RIGF). A run of 5 helical transmembrane segments spans residues 383 to 403 (LLAFCAFFIIGLMIGMITFQF), 406 to 426 (FSFGIGNAAGLLFAGIMLGFL), 447 to 467 (FGLMVFMAGVGLSAGSGINNG), 475 to 495 (MLIAGLVVSLVPVVICFLFGA), and 540 to 560 (AIANVLLTLAGTLIVIIWPGL).

This sequence belongs to the AAE transporter (TC 2.A.81) family. YbjL subfamily.

It localises to the cell membrane. The polypeptide is Putative transport protein YbjL (Salmonella paratyphi C (strain RKS4594)).